Here is a 120-residue protein sequence, read N- to C-terminus: Synaptobrevin (120 aa).

The tract at residues 1–38 (MSAPPSGPAPDAQGGAPGQPTGPPGAPPNTTSNRRLQQ) is disordered. The Cytoplasmic segment spans residues 1–98 (MSAPPSGPAP…KRKYWWKNCK (98 aa)). Positions 29–38 (NTTSNRRLQQ) are enriched in polar residues. Positions 35 to 95 (RLQQTQAQVE…AKLKRKYWWK (61 aa)) constitute a v-SNARE coiled-coil homology domain. The chain crosses the membrane as a helical; Anchor for type IV membrane protein span at residues 99–118 (MMIMLGGIGAIIVIVIIIYF). Residues 119–120 (FT) are Vesicular-facing.

This sequence belongs to the synaptobrevin family. Nervous system specific.

Its subcellular location is the cytoplasmic vesicle. It is found in the secretory vesicle. The protein localises to the synaptic vesicle membrane. It localises to the synapse. The protein resides in the synaptosome. This protein may play a role in packaging, transport or release of neurotransmitters. The chain is Synaptobrevin from Tetronarce californica (Pacific electric ray).